A 227-amino-acid chain; its full sequence is MTNNLSGYRNKIVRVKTAKKRPISSSNWLRRQLNDPYVAKARLEGFRSRAAYKLLEIHDKFRLFTPNMKIVDLGAAPGGWSQVASKLIKASDNNLNNKIISIDLLKIEPIVGVEFLQKDFFEKDTEELIIHGLDGKADLVMSDMASNTIGHKATDHIRTLLLCEQAFEFALKVLKPSCHFIAKIFRGGAETALLNKVKREFRTVKHFKPVSSRSESTEIYLVALNKK.

Residues Gly-78, Trp-80, Asp-103, Asp-119, and Asp-143 each contribute to the S-adenosyl-L-methionine site. Lys-183 functions as the Proton acceptor in the catalytic mechanism.

Belongs to the class I-like SAM-binding methyltransferase superfamily. RNA methyltransferase RlmE family.

It is found in the cytoplasm. It catalyses the reaction uridine(2552) in 23S rRNA + S-adenosyl-L-methionine = 2'-O-methyluridine(2552) in 23S rRNA + S-adenosyl-L-homocysteine + H(+). Functionally, specifically methylates the uridine in position 2552 of 23S rRNA at the 2'-O position of the ribose in the fully assembled 50S ribosomal subunit. In Rickettsia typhi (strain ATCC VR-144 / Wilmington), this protein is Ribosomal RNA large subunit methyltransferase E.